The following is a 267-amino-acid chain: Diphthine--ammonia ligase (267 aa).

Tyr97 bears the Phosphotyrosine mark.

The protein belongs to the Diphthine--ammonia ligase family.

The catalysed reaction is diphthine-[translation elongation factor 2] + NH4(+) + ATP = diphthamide-[translation elongation factor 2] + AMP + diphosphate + H(+). Its pathway is protein modification; peptidyl-diphthamide biosynthesis. In terms of biological role, amidase that catalyzes the last step of diphthamide biosynthesis using ammonium and ATP. Diphthamide biosynthesis consists in the conversion of an L-histidine residue in the translation elongation factor eEF-2 (EEF2) to diphthamide. The sequence is that of Diphthine--ammonia ligase (Dph6) from Rattus norvegicus (Rat).